The chain runs to 234 residues: Synaptogyrin-4 (234 aa).

The MARVEL domain occupies 18–169 (FLKRPKAITR…QAYLAFQELR (152 aa)). 4 helical membrane passes run 25–45 (ITRI…LTDG), 66–86 (CSIA…FLAL), 104–124 (LLDL…FCFL), and 145–165 (AAIT…YLAF). Residues 191–226 (SPPSAASPVNTPTTGPHGPSYASSSLSPYLSTPKAP) are disordered. Over residues 209–221 (PSYASSSLSPYLS) the composition is skewed to low complexity.

It belongs to the synaptogyrin family.

Its subcellular location is the membrane. This Bos taurus (Bovine) protein is Synaptogyrin-4 (SYNGR4).